The primary structure comprises 275 residues: Activator of basal transcription 1 (275 aa).

An N-acetylmethionine modification is found at methionine 1. Composition is skewed to acidic residues over residues 1 to 10 (MEVEGLELDT) and 25 to 34 (AEEEQEESED). The tract at residues 1-39 (MEVEGLELDTAELGPLEGSHQKLEAEEEQEESEDAAGGS) is disordered. Positions 46–145 (GIVYLGHIPP…RRRSPFRYDL (100 aa)) constitute an RRM domain. Residues 164 to 194 (AFERQVRRQRLRAEVAQAKRETDFYLRSVER) are a coiled coil. The disordered stretch occupies residues 200-275 (AADGDSTRPN…RGNSSPARNS (76 aa)). The span at 262 to 275 (PSESRGNSSPARNS) shows a compositional bias: polar residues.

It belongs to the ESF2/ABP1 family. Interacts with ESF1/ABTAP. Interacts with IGHMBP2.

Its subcellular location is the nucleus. The protein localises to the nucleolus. Functionally, could be a novel TATA-binding protein (TBP) which can function as a basal transcription activator. Can act as a regulator of basal transcription for class II genes. The sequence is that of Activator of basal transcription 1 (ABT1) from Bos taurus (Bovine).